We begin with the raw amino-acid sequence, 182 residues long: CDP-diacylglycerol--glycerol-3-phosphate 3-phosphatidyltransferase (182 aa).

Topologically, residues glutamine 2–phenylalanine 12 are cytoplasmic. The helical transmembrane segment at arginine 13–leucine 37 threads the bilayer. Topologically, residues isoleucine 38–threonine 60 are periplasmic. Residues arginine 61 to leucine 81 traverse the membrane as a helical segment. Topologically, residues valine 82 to tyrosine 86 are cytoplasmic. A helical membrane pass occupies residues histidine 87–alanine 107. At leucine 108–proline 145 the chain is on the periplasmic side. The chain crosses the membrane as a helical span at residues asparagine 146–methionine 168. The Cytoplasmic segment spans residues leucine 169 to aspartate 181.

This sequence belongs to the CDP-alcohol phosphatidyltransferase class-I family.

It is found in the cell inner membrane. The catalysed reaction is a CDP-1,2-diacyl-sn-glycerol + sn-glycerol 3-phosphate = a 1,2-diacyl-sn-glycero-3-phospho-(1'-sn-glycero-3'-phosphate) + CMP + H(+). It participates in phospholipid metabolism; phosphatidylglycerol biosynthesis; phosphatidylglycerol from CDP-diacylglycerol: step 1/2. Its function is as follows. Catalyzes the conversion of cytidine diphosphate diacylglycerol (CDP-DG) and glycerol 3-phosphate into phosphatidylglycerol. Essential for the synthesis of anionic phospholipids, thereby playing a role in balancing the ratio of zwitterionic and anionic phospholipids, which is thought to be important for normal membrane function. This Salmonella paratyphi A (strain ATCC 9150 / SARB42) protein is CDP-diacylglycerol--glycerol-3-phosphate 3-phosphatidyltransferase.